The sequence spans 42 residues: Photosystem I reaction center subunit IX (42 aa).

Residues 7–27 form a helical membrane-spanning segment; it reads YLSTAPVLAALSLGFLAGLLI.

The protein belongs to the PsaJ family.

The protein resides in the plastid. It localises to the chloroplast thylakoid membrane. In terms of biological role, may help in the organization of the PsaE and PsaF subunits. In Cryptomeria japonica (Japanese cedar), this protein is Photosystem I reaction center subunit IX.